The chain runs to 83 residues: Small ribosomal subunit protein bS16 (83 aa).

This sequence belongs to the bacterial ribosomal protein bS16 family.

The chain is Small ribosomal subunit protein bS16 from Azoarcus sp. (strain BH72).